We begin with the raw amino-acid sequence, 593 residues long: Isocitrate dehydrogenase kinase/phosphatase (593 aa).

Residues A324–L330 and K345 contribute to the ATP site. D380 is an active-site residue.

The protein belongs to the AceK family.

It localises to the cytoplasm. The enzyme catalyses L-seryl-[isocitrate dehydrogenase] + ATP = O-phospho-L-seryl-[isocitrate dehydrogenase] + ADP + H(+). Its function is as follows. Bifunctional enzyme which can phosphorylate or dephosphorylate isocitrate dehydrogenase (IDH) on a specific serine residue. This is a regulatory mechanism which enables bacteria to bypass the Krebs cycle via the glyoxylate shunt in response to the source of carbon. When bacteria are grown on glucose, IDH is fully active and unphosphorylated, but when grown on acetate or ethanol, the activity of IDH declines drastically concomitant with its phosphorylation. The chain is Isocitrate dehydrogenase kinase/phosphatase from Dechloromonas aromatica (strain RCB).